Reading from the N-terminus, the 555-residue chain is Glutamine--tRNA ligase (555 aa).

Residues 34-44 carry the 'HIGH' region motif; the sequence is PEPNGYLHIGH. Residues 35-37 and 41-47 each bind ATP; these read EPN and HIGHAKS. L-glutamine contacts are provided by Asp-67 and Tyr-212. ATP contacts are provided by residues Thr-231, 261 to 262, and 269 to 271; these read RL and MSK. The short motif at 268-272 is the 'KMSKS' region element; it reads VMSKR. An interaction with tRNA region spans residues 317-324; the sequence is TKQDNTIE.

It belongs to the class-I aminoacyl-tRNA synthetase family. Monomer.

The protein resides in the cytoplasm. The enzyme catalyses tRNA(Gln) + L-glutamine + ATP = L-glutaminyl-tRNA(Gln) + AMP + diphosphate. This Salmonella paratyphi B (strain ATCC BAA-1250 / SPB7) protein is Glutamine--tRNA ligase.